Here is a 578-residue protein sequence, read N- to C-terminus: A-type ATP synthase subunit A (578 aa).

Gly228–Thr235 serves as a coordination point for ATP.

This sequence belongs to the ATPase alpha/beta chains family. Has multiple subunits with at least A(3), B(3), C, D, E, F, H, I and proteolipid K(x).

Its subcellular location is the cell membrane. It carries out the reaction ATP + H2O + 4 H(+)(in) = ADP + phosphate + 5 H(+)(out). Its function is as follows. Component of the A-type ATP synthase that produces ATP from ADP in the presence of a proton gradient across the membrane. The A chain is the catalytic subunit. The chain is A-type ATP synthase subunit A from Methanosarcina barkeri (strain Fusaro / DSM 804).